A 72-amino-acid polypeptide reads, in one-letter code: MKKIVFVLTLMLFSFGTLGQETASGQVGDVSSSTIATEVSEAECGTQSATTQGENDWDWCCELCCNPACFGC.

The N-terminal stretch at 1–19 (MKKIVFVLTLMLFSFGTLG) is a signal peptide. 3 disulfide bridges follow: cysteine 60/cysteine 65, cysteine 61/cysteine 69, and cysteine 64/cysteine 72.

It belongs to the heat-stable enterotoxin family.

It is found in the secreted. In terms of biological role, toxin which activates the particulate form of guanylate cyclase and increases cyclic GMP levels within the host intestinal epithelial cells. Highly toxic. The polypeptide is Heat-stable enterotoxin C (ystC) (Yersinia enterocolitica).